Consider the following 590-residue polypeptide: Glutamine--tRNA ligase (590 aa).

Positions 55-65 match the 'HIGH' region motif; it reads PEPNGYLHIGH. ATP-binding positions include 56–58 and 62–68; these read EPN and HIGHAKS. The L-glutamine site is built by Asp-93 and Tyr-238. ATP is bound by residues Thr-257 and 292–293; that span reads RL. The 'KMSKS' region signature appears at 299–303; the sequence is ITSKR.

Belongs to the class-I aminoacyl-tRNA synthetase family. Monomer.

It localises to the cytoplasm. The catalysed reaction is tRNA(Gln) + L-glutamine + ATP = L-glutaminyl-tRNA(Gln) + AMP + diphosphate. The chain is Glutamine--tRNA ligase from Polynucleobacter necessarius subsp. necessarius (strain STIR1).